We begin with the raw amino-acid sequence, 162 residues long: Regulator of sigma D (162 aa).

It belongs to the Rsd/AlgQ family. Interacts with RpoD.

It is found in the cytoplasm. In terms of biological role, binds RpoD and negatively regulates RpoD-mediated transcription activation by preventing the interaction between the primary sigma factor RpoD with the catalytic core of the RNA polymerase and with promoter DNA. May be involved in replacement of the RNA polymerase sigma subunit from RpoD to RpoS during the transition from exponential growth to the stationary phase. This chain is Regulator of sigma D, found in Salmonella typhi.